The following is a 651-amino-acid chain: Mitochondrial sodium/calcium exchanger protein (651 aa).

A helical transmembrane segment spans residues 51-71; the sequence is VILIILGILYLIILFVIMSSI. The Cytoplasmic portion of the chain corresponds to 72 to 91; that stretch reads ADDFFCPAISGIVSHLRMSE. The chain crosses the membrane as a helical span at residues 92–112; the sequence is SIAGVTFLAFGNGAPDVFSSI. Over 113-126 the chain is Extracellular; that stretch reads SSVLTTPKPKADLA. The helical transmembrane segment at 127-147 threads the bilayer; that stretch reads LGDLFGTSIFVTTVVLAIIIF. Residues 148–161 lie on the Cytoplasmic side of the membrane; sequence TKSFKVAIIPTLRD. A helical membrane pass occupies residues 162–182; it reads LIFYMTTLAFIVFCFLKFDKI. Residue glutamate 183 is a topological domain, extracellular. A helical transmembrane segment spans residues 184-204; it reads VWMPATFLGIYGVYVVTVIIL. Topologically, residues 205-398 are cytoplasmic; that stretch reads GIYRTHRKKR…PSRDEFSEMN (194 aa). A helical membrane pass occupies residues 399-419; that stretch reads IFIKIVTVIKVVPVFFFKLTV. The Extracellular portion of the chain corresponds to 420–428; that stretch reads PSNEMSWCK. The helical transmembrane segment at 429-449 threads the bilayer; sequence PLFILHCFASIQFALFSIQII. The Cytoplasmic portion of the chain corresponds to 450–458; it reads TLKPFDGSP. The chain crosses the membrane as a helical span at residues 459-479; the sequence is GLWLYGLGFSAILAMVAMYFL. Residues 480–486 lie on the Extracellular side of the membrane; sequence PLSKEQK. Residues 487 to 507 form a helical membrane-spanning segment; sequence YYKEIYSYLGFLMSIAWIYAT. Residues 508 to 510 are Cytoplasmic-facing; that stretch reads SNE. Residues 511-531 form a helical membrane-spanning segment; sequence IVSVVTMIGVVTGLSMELLGL. Topologically, residues 532-559 are extracellular; the sequence is TIMAWSNCIGDIVADIAVVKQGYPKMAM. Residues 560-580 traverse the membrane as a helical segment; the sequence is AAAIGGPLFNLLIGFGLPFTI. The Cytoplasmic portion of the chain corresponds to 581-595; the sequence is AAAQGKEMELLINPV. Residues 596–616 form a helical membrane-spanning segment; sequence YRLLMLFLGISLVTTFVALFI. Residues 617-626 are Extracellular-facing; the sequence is QRFTVRRPHA. The helical transmembrane segment at 627-647 threads the bilayer; the sequence is VLLIFIFVVFLIFICLAEFHV. The Cytoplasmic portion of the chain corresponds to 648 to 651; sequence LEWN.

Belongs to the Ca(2+):cation antiporter (CaCA) (TC 2.A.19) family. SLC24A subfamily. As to expression, expressed in the seam cells of the organism. Expression is visible in the seam cells across all larval stages, and expression persists into the adult stage of the organism.

It is found in the mitochondrion inner membrane. With respect to regulation, inhibited by the sodium/calcium exchanger inhibitor CGP-37157. Functionally, mitochondrial sodium/calcium antiporter that mediates sodium-dependent calcium efflux from mitochondrion, thereby acting as a key regulator of mitochondrion calcium homeostasis. Required for patterning of neural circuits: functions in the same pathway as RAC-dependent effectors of the unc-6/netrin signaling pathway to set left/ right patterning of the VD/DD GABAergic circuit. This is Mitochondrial sodium/calcium exchanger protein from Caenorhabditis elegans.